The sequence spans 163 residues: MIPLPIRPLSHSEFAPFGDVIEPDDAKSFPINAGKCIRYHDLARVETSGPEARTLVSLLKGEPYDIPLTLKMVERHPLGSQAFIPLTGNPFLVVVAPDEGGEPGEPIAFETGPGQGVNIAQNVWHGILTPLRSTSEFVVIDRGGSGCNLEEHFFEKPYQVEYA.

This sequence belongs to the ureidoglycolate lyase family. In terms of assembly, homodimer. It depends on Ni(2+) as a cofactor.

It carries out the reaction (S)-ureidoglycolate = urea + glyoxylate. The protein operates within nitrogen metabolism; (S)-allantoin degradation. Catalyzes the catabolism of the allantoin degradation intermediate (S)-ureidoglycolate, generating urea and glyoxylate. Involved in the utilization of allantoin as nitrogen source. The protein is Ureidoglycolate lyase 2 of Rhizobium meliloti (strain 1021) (Ensifer meliloti).